The primary structure comprises 228 residues: Small ribosomal subunit protein uS2 (228 aa).

This sequence belongs to the universal ribosomal protein uS2 family.

This chain is Small ribosomal subunit protein uS2, found in Buchnera aphidicola subsp. Baizongia pistaciae (strain Bp).